We begin with the raw amino-acid sequence, 363 residues long: Pyrimidine monooxygenase RutA (363 aa).

FMN contacts are provided by residues 49–50 (IK), Asn-115, Glu-124, 140–141 (RY), and Ser-190.

Belongs to the NtaA/SnaA/DszA monooxygenase family. RutA subfamily.

It catalyses the reaction uracil + FMNH2 + NADH + O2 = (Z)-3-ureidoacrylate + FMN + NAD(+) + H2O + H(+). It carries out the reaction thymine + FMNH2 + NADH + O2 = (Z)-2-methylureidoacrylate + FMN + NAD(+) + H2O + H(+). Its function is as follows. Catalyzes the pyrimidine ring opening between N-3 and C-4 by an unusual flavin hydroperoxide-catalyzed mechanism, adding oxygen atoms in the process to yield ureidoacrylate peracid, that immediately reacts with FMN forming ureidoacrylate and FMN-N(5)-oxide. The FMN-N(5)-oxide reacts spontaneously with NADH to produce FMN. Requires the flavin reductase RutF to regenerate FMN in vivo. This Escherichia coli O127:H6 (strain E2348/69 / EPEC) protein is Pyrimidine monooxygenase RutA.